Reading from the N-terminus, the 729-residue chain is Bromo and FHA domain-containing protein DDB_G0267958 (729 aa).

Residues 46–79 are compositionally biased toward low complexity; sequence LPIPNTSNTNPPMNQSSSPTTTTTTPTTTTTPTT. The disordered stretch occupies residues 46-83; it reads LPIPNTSNTNPPMNQSSSPTTTTTTPTTTTTPTTAEPA. The FHA domain occupies 112–167; sequence LIIGSDTELADIQVVRPGIYPKHVEIIYDKEKKKFYLNPLIDPKDSDNVRLNFVPF. Low complexity-rich tracts occupy residues 208 to 221, 229 to 275, and 283 to 306; these read IPSN…NTPI, PPSS…ATKT, and PTKT…AVKK. 2 disordered regions span residues 208 to 361 and 403 to 442; these read IPSN…MSCK and SRRP…PKVP. The span at 310-341 shows a compositional bias: acidic residues; the sequence is DDDYGDDYNEEEDDDDEEEEEEEEEEEEEEEV. A coiled-coil region spans residues 315–352; sequence DDYNEEEDDDDEEEEEEEEEEEEEEEVESKQIKVVNSK. Positions 406–431 are enriched in low complexity; it reads PTAPVTPTKPTSTKKVTTPKKATVVK. Residues 498–617 form the Bromo domain; the sequence is SNEKKEILKC…IELYKALSNS (120 aa). Residues 659 to 718 adopt a coiled-coil conformation; the sequence is SKNKEQTVPQEEDEEEEEEEEEEEEEEEEGEEGKEDEEEEEKEEEEGEENEEEEDVEIDD. The disordered stretch occupies residues 659 to 729; sequence SKNKEQTVPQ…EIDQESDDDQ (71 aa). A compositionally biased stretch (acidic residues) spans 668-729; sequence QEEDEEEEEE…EIDQESDDDQ (62 aa).

This is Bromo and FHA domain-containing protein DDB_G0267958 from Dictyostelium discoideum (Social amoeba).